Consider the following 127-residue polypeptide: Large ribosomal subunit protein bL21 (127 aa).

This sequence belongs to the bacterial ribosomal protein bL21 family. In terms of assembly, part of the 50S ribosomal subunit. Contacts protein L20.

Its function is as follows. This protein binds to 23S rRNA in the presence of protein L20. In Blochmanniella floridana, this protein is Large ribosomal subunit protein bL21.